We begin with the raw amino-acid sequence, 449 residues long: Allantoinase (449 aa).

Zn(2+) contacts are provided by His-59, His-61, Lys-146, His-182, His-238, and Asp-311. At Lys-146 the chain carries N6-carboxylysine.

It belongs to the metallo-dependent hydrolases superfamily. Allantoinase family. In terms of assembly, homotetramer. Zn(2+) serves as cofactor. In terms of processing, carboxylation allows a single lysine to coordinate two zinc ions.

The enzyme catalyses (S)-allantoin + H2O = allantoate + H(+). It functions in the pathway nitrogen metabolism; (S)-allantoin degradation; allantoate from (S)-allantoin: step 1/1. Catalyzes the conversion of allantoin (5-ureidohydantoin) to allantoic acid by hydrolytic cleavage of the five-member hydantoin ring. This is Allantoinase from Deinococcus geothermalis (strain DSM 11300 / CIP 105573 / AG-3a).